Reading from the N-terminus, the 137-residue chain is Large ribosomal subunit protein uL16 (137 aa).

This sequence belongs to the universal ribosomal protein uL16 family. Part of the 50S ribosomal subunit.

Functionally, binds 23S rRNA and is also seen to make contacts with the A and possibly P site tRNAs. This Pseudomonas aeruginosa (strain LESB58) protein is Large ribosomal subunit protein uL16.